Consider the following 338-residue polypeptide: Replication factor C subunit 3 (338 aa).

Gly57–Thr64 lines the ATP pocket.

It belongs to the activator 1 small subunits family. Heteropentamer of subunits RFC1, RFC2, RFC3, RFC4 and RFC5 that forms a complex with PCNA in the presence of ATP.

It localises to the nucleus. Functionally, the elongation of primed DNA templates by DNA polymerase delta and epsilon requires the action of the accessory proteins proliferating cell nuclear antigen (PCNA) and activator 1. Subunit 3 binds ATP. In Blastobotrys adeninivorans (Yeast), this protein is Replication factor C subunit 3 (RFC3).